Consider the following 365-residue polypeptide: Peptide chain release factor 2 (365 aa).

Residue Gln251 is modified to N5-methylglutamine.

Belongs to the prokaryotic/mitochondrial release factor family. In terms of processing, methylated by PrmC. Methylation increases the termination efficiency of RF2.

The protein localises to the cytoplasm. Its function is as follows. Peptide chain release factor 2 directs the termination of translation in response to the peptide chain termination codons UGA and UAA. This chain is Peptide chain release factor 2, found in Aliarcobacter butzleri (strain RM4018) (Arcobacter butzleri).